Reading from the N-terminus, the 327-residue chain is tRNA N6-adenosine threonylcarbamoyltransferase (327 aa).

Residues His-109 and His-113 each contribute to the Fe cation site. Residues Met-132 to Gly-136, Asp-165, Gly-178, Asp-182, and Asn-268 contribute to the substrate site. Position 296 (Asp-296) interacts with Fe cation.

This sequence belongs to the KAE1 / TsaD family. Forms a hexamer composed of two TsaB, TsaD and TsaE trimers. The cofactor is Fe(2+).

The protein resides in the cytoplasm. It catalyses the reaction L-threonylcarbamoyladenylate + adenosine(37) in tRNA = N(6)-L-threonylcarbamoyladenosine(37) in tRNA + AMP + H(+). Required for the formation of a threonylcarbamoyl group on adenosine at position 37 (t(6)A37) in tRNAs that read codons beginning with adenine. Is involved in the transfer of the threonylcarbamoyl moiety of threonylcarbamoyl-AMP (TC-AMP) to the N6 group of A37, together with TsaE and TsaB. TsaD likely plays a direct catalytic role in this reaction. The polypeptide is tRNA N6-adenosine threonylcarbamoyltransferase (Thermotoga maritima (strain ATCC 43589 / DSM 3109 / JCM 10099 / NBRC 100826 / MSB8)).